The sequence spans 401 residues: Glucose-6-phosphate isomerase (401 aa).

E261 serves as the catalytic Proton donor. Residues H282 and K392 contribute to the active site.

This sequence belongs to the GPI family. In terms of assembly, homodimer.

It is found in the cytoplasm. The enzyme catalyses alpha-D-glucose 6-phosphate = beta-D-fructose 6-phosphate. It functions in the pathway carbohydrate biosynthesis; gluconeogenesis. Its pathway is carbohydrate degradation; glycolysis; D-glyceraldehyde 3-phosphate and glycerone phosphate from D-glucose: step 2/4. Its activity is regulated as follows. Competively inhibited by 6-phosphogluconate and erythrose 4-phosphate. Its function is as follows. Catalyzes the isomerization of glucose-6-P to fructose-6-P. This Methanocaldococcus jannaschii (strain ATCC 43067 / DSM 2661 / JAL-1 / JCM 10045 / NBRC 100440) (Methanococcus jannaschii) protein is Glucose-6-phosphate isomerase.